The following is a 183-amino-acid chain: Small ribosomal subunit protein uS5 (183 aa).

Positions 11–71 constitute an S5 DRBM domain; it reads FLERVVGINR…EEAKKSFFRV (61 aa).

Belongs to the universal ribosomal protein uS5 family. In terms of assembly, part of the 30S ribosomal subunit. Contacts proteins S4 and S8.

Its function is as follows. With S4 and S12 plays an important role in translational accuracy. Located at the back of the 30S subunit body where it stabilizes the conformation of the head with respect to the body. The protein is Small ribosomal subunit protein uS5 of Micrococcus luteus (Micrococcus lysodeikticus).